The following is a 498-amino-acid chain: Lysine--tRNA ligase (498 aa).

Mg(2+) is bound by residues Glu408 and Glu415.

The protein belongs to the class-II aminoacyl-tRNA synthetase family. Homodimer. Mg(2+) is required as a cofactor.

It localises to the cytoplasm. The enzyme catalyses tRNA(Lys) + L-lysine + ATP = L-lysyl-tRNA(Lys) + AMP + diphosphate. The chain is Lysine--tRNA ligase from Listeria welshimeri serovar 6b (strain ATCC 35897 / DSM 20650 / CCUG 15529 / CIP 8149 / NCTC 11857 / SLCC 5334 / V8).